The primary structure comprises 46 residues: U-myrmeciitoxin(01)-Mg6a (46 aa).

An N-terminal signal peptide occupies residues 1–20; it reads MNLKTFCFFLLGIFVTLTVT. A propeptide spanning residues 21-33 is cleaved from the precursor; the sequence is VIPIANADAEADT.

Contains 1 disulfide bond. In terms of tissue distribution, expressed by the venom gland.

It localises to the secreted. The protein is U-myrmeciitoxin(01)-Mg6a of Myrmecia gulosa (Red bulldog ant).